Consider the following 27-residue polypeptide: M-ectatotoxin-Eb2a (27 aa).

As to expression, expressed by the venom gland.

The protein localises to the secreted. In terms of biological role, antimicrobial peptide forming an alpha-helix in watery and membraneous environments, enabling it to perforate membranes. Active against Gram-negative bacteria E.coli DH5alpha (MIC=5 uM), E.coli MH1 (MIC=0.6 uM) and P.aeruginosa PAO1 (MIC=10 uM) and against Gram-positive bacteria B.subtilis VKM B-501 (MIC=0.6 uM) and A.globiformis VKM Ac-1112 (MIC=0.2 uM). Has cytolytic and hemolytic activity. This Ectatomma brunneum (Ant) protein is M-ectatotoxin-Eb2a.